Consider the following 341-residue polypeptide: MVVVAVAGGTGGVGRTVLDAIAKSGQHQAIVLSRTTSVPTAVDEPKRFAVDYNSVEQMKKILQENNVQVVVSALLLVDEAVAQSQINLIRAAAQSGTVTKFIPSEYYIDFHAPIPYVSLQSILSRQRFSLFSTSGADLFTNFQLEAEAELSRHAQLTWTLIRVGIFLDHLTMPHNPKTTYITPFWVFVDIDHEQCVFPGDGSQPLVLTHSQDLAAYIERLVGLPAENWPRESVVASNKLLVKDLESLVNKVTGKKFKVAYDSVECIHKGRITQLPSNTAVFQDPAKGEMFRDVEHQVMLSMLSRAHDLPGKNLAELFPEVETTDIEDFFRSGWTLKQSRAP.

Belongs to the NmrA-type oxidoreductase family. Isoflavone reductase subfamily.

The protein operates within mycotoxin biosynthesis. Functionally, oxidoreductase; part of the gene cluster that mediates the biosynthesis of swainsonine (SW), a cytotoxic fungal alkaloid and a potential cancer therapy drug. Swainsonine production occurs via a multibranched pathway and is dispensable for fungal colonization of plants and infection of insect hosts. The first step of swainsonine biosynthesis is the production of the precursor pipecolic acid (PA) via conversion of L-lysine (Lys) to 1-piperideine-6-carboxylate (P6C) by the aminotransferase swnA, the latter being further reduced to PA by the reductase swnR. PA can be converted from lysine by both the SW biosynthetic cluster and the unclustered genes such as lysine cyclodeaminase. The PKS-NRPS hybrid synthetase swnK uptakes and condensates PA and malonyl-CoA with and without skipping of the ketoreductase (KR) domain in order to produce 3 intermediates, 1-oxoindolizidine, (1S)-1-hydroxyindolizin, and (1R)-1-hydroxyindolizine; with the transisomer (1S)-1-hydroxyindolizin being predominant. The terminal thioester reductase (TE) domain of swnK is involved in reduction of the thioester bond to release the intermediate aldehydes. The oxidoreductase swnN could contribute to the reduction of 1-oxoindolizidine to (1S)-1-hydroxyindolizin and (1R)-1-hydroxyindolizine, contributing to the major route of SW production. The dioxygenase swnH2 would be responsible for the oxidization of (1R)-1-hydroxyindolizine into (1R,2S)-1,2-dihydroxyindolizine and of (1S)-1-hydroxyindolizin to yield both (1R,2S)-1,2-dihydroxyindolizine and (1S,2S)-1,2-dihydroxyindolizine. The dioxygenase swnH1 then performs the conversion of the 1,2-dihydroxyindolizine epimers to SW. The chain is Oxidoreductase swnN from Metarhizium robertsii (strain ARSEF 23 / ATCC MYA-3075) (Metarhizium anisopliae (strain ARSEF 23)).